A 729-amino-acid polypeptide reads, in one-letter code: Fatty acid oxidation complex subunit alpha (729 aa).

The enoyl-CoA hydratase/isomerase stretch occupies residues 1–189; it reads MLYKGDTLYL…KVGLVDAVVK (189 aa). Asp-296 contacts substrate. Positions 311-729 are 3-hydroxyacyl-CoA dehydrogenase; the sequence is ETPKQAAVLG…AQPVGELQTA (419 aa). Residues Met-324, Asp-343, 400–402, Lys-407, and Ser-429 each bind NAD(+); that span reads VVE. The For 3-hydroxyacyl-CoA dehydrogenase activity role is filled by His-450. Residue Asn-453 participates in NAD(+) binding. Residues Asn-500 and Tyr-660 each contribute to the substrate site. The disordered stretch occupies residues 708–729; sequence SHNAPYYPQVEPAQPVGELQTA.

It in the N-terminal section; belongs to the enoyl-CoA hydratase/isomerase family. In the C-terminal section; belongs to the 3-hydroxyacyl-CoA dehydrogenase family. Heterotetramer of two alpha chains (FadB) and two beta chains (FadA).

It carries out the reaction a (3S)-3-hydroxyacyl-CoA + NAD(+) = a 3-oxoacyl-CoA + NADH + H(+). The catalysed reaction is a (3S)-3-hydroxyacyl-CoA = a (2E)-enoyl-CoA + H2O. It catalyses the reaction a 4-saturated-(3S)-3-hydroxyacyl-CoA = a (3E)-enoyl-CoA + H2O. The enzyme catalyses (3S)-3-hydroxybutanoyl-CoA = (3R)-3-hydroxybutanoyl-CoA. It carries out the reaction a (3Z)-enoyl-CoA = a 4-saturated (2E)-enoyl-CoA. The catalysed reaction is a (3E)-enoyl-CoA = a 4-saturated (2E)-enoyl-CoA. It participates in lipid metabolism; fatty acid beta-oxidation. Its function is as follows. Involved in the aerobic and anaerobic degradation of long-chain fatty acids via beta-oxidation cycle. Catalyzes the formation of 3-oxoacyl-CoA from enoyl-CoA via L-3-hydroxyacyl-CoA. It can also use D-3-hydroxyacyl-CoA and cis-3-enoyl-CoA as substrate. This Cronobacter sakazakii (strain ATCC BAA-894) (Enterobacter sakazakii) protein is Fatty acid oxidation complex subunit alpha.